The chain runs to 88 residues: Small ribosomal subunit protein bS20 (88 aa).

The disordered stretch occupies residues 1–20; the sequence is MANTKSARKSLIKSKQQRKC.

It belongs to the bacterial ribosomal protein bS20 family.

Binds directly to 16S ribosomal RNA. The protein is Small ribosomal subunit protein bS20 of Blochmanniella pennsylvanica (strain BPEN).